A 290-amino-acid chain; its full sequence is Acetylglutamate kinase (290 aa).

Residues 60-61, Arg-82, and Asn-185 each bind substrate; that span reads GG.

This sequence belongs to the acetylglutamate kinase family. ArgB subfamily.

The protein resides in the cytoplasm. The catalysed reaction is N-acetyl-L-glutamate + ATP = N-acetyl-L-glutamyl 5-phosphate + ADP. It participates in amino-acid biosynthesis; L-arginine biosynthesis; N(2)-acetyl-L-ornithine from L-glutamate: step 2/4. In terms of biological role, catalyzes the ATP-dependent phosphorylation of N-acetyl-L-glutamate. This Archaeoglobus fulgidus (strain ATCC 49558 / DSM 4304 / JCM 9628 / NBRC 100126 / VC-16) protein is Acetylglutamate kinase.